The sequence spans 99 residues: Large ribosomal subunit protein bL27 (99 aa).

Residues 13-65 are disordered; sequence AHHKGGGSTTNGRNSAGRRLGAKRADGQEVHAGSIIYRQRGTKIHPGKNVGRG.

The protein belongs to the bacterial ribosomal protein bL27 family.

The chain is Large ribosomal subunit protein bL27 from Lactobacillus delbrueckii subsp. bulgaricus (strain ATCC BAA-365 / Lb-18).